A 225-amino-acid chain; its full sequence is Small ribosomal subunit protein eS1 (225 aa).

The span at Pro206–Ala216 shows a compositional bias: acidic residues. Residues Pro206–Glu225 form a disordered region.

Belongs to the eukaryotic ribosomal protein eS1 family.

The chain is Small ribosomal subunit protein eS1 from Methanococcus maripaludis (strain C5 / ATCC BAA-1333).